The sequence spans 448 residues: Methylenetetrahydrofolate--tRNA-(uracil-5-)-methyltransferase TrmFO (448 aa).

13–18 (GAGLAG) is an FAD binding site.

This sequence belongs to the MnmG family. TrmFO subfamily. It depends on FAD as a cofactor.

It localises to the cytoplasm. It carries out the reaction uridine(54) in tRNA + (6R)-5,10-methylene-5,6,7,8-tetrahydrofolate + NADH + H(+) = 5-methyluridine(54) in tRNA + (6S)-5,6,7,8-tetrahydrofolate + NAD(+). The enzyme catalyses uridine(54) in tRNA + (6R)-5,10-methylene-5,6,7,8-tetrahydrofolate + NADPH + H(+) = 5-methyluridine(54) in tRNA + (6S)-5,6,7,8-tetrahydrofolate + NADP(+). Catalyzes the folate-dependent formation of 5-methyl-uridine at position 54 (M-5-U54) in all tRNAs. In Streptococcus pyogenes serotype M4 (strain MGAS10750), this protein is Methylenetetrahydrofolate--tRNA-(uracil-5-)-methyltransferase TrmFO.